Reading from the N-terminus, the 813-residue chain is Calpain-7 (813 aa).

At Met-1 the chain carries N-acetylmethionine. Thr-95 is modified (phosphothreonine). Residues 232–540 (RERFAYPMPF…YDVIYLSWNP (309 aa)) form the Calpain catalytic domain. Catalysis depends on residues Cys-290, His-458, and Asn-478. A domain III region spans residues 541 to 701 (GLFKESTCIH…INGKWSGQSA (161 aa)). Positions 702-813 (GGCGNFQETH…IIPIKITQLQ (112 aa)) are domain N.

It belongs to the peptidase C2 family. In terms of tissue distribution, ubiquitous.

It is found in the nucleus. In terms of biological role, calcium-regulated non-lysosomal thiol-protease. The sequence is that of Calpain-7 (CAPN7) from Homo sapiens (Human).